The chain runs to 100 residues: NADH-quinone oxidoreductase subunit K (100 aa).

3 consecutive transmembrane segments (helical) span residues M1–G21, I28–A48, and F64–F84.

Belongs to the complex I subunit 4L family. NDH-1 is composed of 14 different subunits. Subunits NuoA, H, J, K, L, M, N constitute the membrane sector of the complex.

It is found in the cell inner membrane. It carries out the reaction a quinone + NADH + 5 H(+)(in) = a quinol + NAD(+) + 4 H(+)(out). NDH-1 shuttles electrons from NADH, via FMN and iron-sulfur (Fe-S) centers, to quinones in the respiratory chain. The immediate electron acceptor for the enzyme in this species is believed to be ubiquinone. Couples the redox reaction to proton translocation (for every two electrons transferred, four hydrogen ions are translocated across the cytoplasmic membrane), and thus conserves the redox energy in a proton gradient. This chain is NADH-quinone oxidoreductase subunit K, found in Helicobacter pylori (strain Shi470).